Here is a 331-residue protein sequence, read N- to C-terminus: Ribonuclease Z (331 aa).

7 residues coordinate Zn(2+): His56, His58, Asp60, His61, His162, Asp235, and His297. Asp60 acts as the Proton acceptor in catalysis.

The protein belongs to the RNase Z family. In terms of assembly, homodimer. Requires Zn(2+) as cofactor.

It catalyses the reaction Endonucleolytic cleavage of RNA, removing extra 3' nucleotides from tRNA precursor, generating 3' termini of tRNAs. A 3'-hydroxy group is left at the tRNA terminus and a 5'-phosphoryl group is left at the trailer molecule.. Its function is as follows. Zinc phosphodiesterase, which displays some tRNA 3'-processing endonuclease activity. Probably involved in tRNA maturation, by removing a 3'-trailer from precursor tRNA. This Deinococcus radiodurans (strain ATCC 13939 / DSM 20539 / JCM 16871 / CCUG 27074 / LMG 4051 / NBRC 15346 / NCIMB 9279 / VKM B-1422 / R1) protein is Ribonuclease Z (rnz).